The following is a 794-amino-acid chain: Protein SEY1 (794 aa).

The Cytoplasmic portion of the chain corresponds to 1 to 687; sequence MMEVIDSVLG…KRSIIKTTTA (687 aa). The GB1/RHD3-type G domain maps to 43–272; the sequence is GLDYHVISVF…ANPYYFKPQY (230 aa). 53–60 contributes to the GTP binding site; that stretch reads GSQSSGKS. Residues 331 to 352 adopt a coiled-coil conformation; it reads VDHILDDREKLGEVLKNLKQEC. Residues 688-708 traverse the membrane as a helical segment; it reads IPIWMYLLVVALGWNEFVMVL. Over 709–711 the chain is Lumenal; it reads RNP. Residues 712–732 traverse the membrane as a helical segment; it reads LLVTLVLLFGVGFIFVNKFGL. The Cytoplasmic portion of the chain corresponds to 733–794; it reads WGPVLNVAHN…SDNEKIEKSE (62 aa). The tract at residues 770–794 is disordered; sequence NSAGKESYEMKDMSDSDNEKIEKSE. Basic and acidic residues predominate over residues 775-794; sequence ESYEMKDMSDSDNEKIEKSE.

The protein belongs to the TRAFAC class dynamin-like GTPase superfamily. GB1/RHD3 GTPase family. RHD3 subfamily.

Its subcellular location is the endoplasmic reticulum membrane. In terms of biological role, cooperates with the reticulon proteins and tubule-shaping DP1 family proteins to generate and maintain the structure of the tubular endoplasmic reticulum network. Has GTPase activity, which is required for its function in ER organization. The protein is Protein SEY1 of Zygosaccharomyces rouxii (strain ATCC 2623 / CBS 732 / NBRC 1130 / NCYC 568 / NRRL Y-229).